A 396-amino-acid chain; its full sequence is Phosphoglycerate kinase (396 aa).

Substrate-binding positions include 21–23 (DFN), Arg-36, 59–62 (HLGK), Arg-119, and Arg-156. ATP is bound by residues Lys-206, Gly-294, Glu-325, and 352–355 (GGDS).

Belongs to the phosphoglycerate kinase family. Monomer.

Its subcellular location is the cytoplasm. The enzyme catalyses (2R)-3-phosphoglycerate + ATP = (2R)-3-phospho-glyceroyl phosphate + ADP. It functions in the pathway carbohydrate degradation; glycolysis; pyruvate from D-glyceraldehyde 3-phosphate: step 2/5. This chain is Phosphoglycerate kinase, found in Listeria welshimeri serovar 6b (strain ATCC 35897 / DSM 20650 / CCUG 15529 / CIP 8149 / NCTC 11857 / SLCC 5334 / V8).